Reading from the N-terminus, the 351-residue chain is Mannonate dehydratase (351 aa).

It belongs to the mannonate dehydratase family. Fe(2+) is required as a cofactor. The cofactor is Mn(2+).

It carries out the reaction D-mannonate = 2-dehydro-3-deoxy-D-gluconate + H2O. Its pathway is carbohydrate metabolism; pentose and glucuronate interconversion. Its function is as follows. Catalyzes the dehydration of D-mannonate. This Clostridium acetobutylicum (strain ATCC 824 / DSM 792 / JCM 1419 / IAM 19013 / LMG 5710 / NBRC 13948 / NRRL B-527 / VKM B-1787 / 2291 / W) protein is Mannonate dehydratase.